Reading from the N-terminus, the 306-residue chain is Dermonecrotic toxin LiSicTox-alphaIA2ai (306 aa).

The first 18 residues, 1–18 (MLPYIALILVCWSVLSQA), serve as a signal peptide directing secretion. A propeptide spanning residues 19–26 (AQTDVEGR) is cleaved from the precursor. Residue histidine 38 is part of the active site. Mg(2+)-binding residues include glutamate 58 and aspartate 60. Histidine 74 serves as the catalytic Nucleophile. Intrachain disulfides connect cysteine 78–cysteine 84 and cysteine 80–cysteine 223. Aspartate 118 lines the Mg(2+) pocket. Asparagine 283 carries N-linked (GlcNAc...) asparagine glycosylation.

This sequence belongs to the arthropod phospholipase D family. Class II subfamily. Class IIa sub-subfamily. Mg(2+) is required as a cofactor. In terms of tissue distribution, expressed by the venom gland.

Its subcellular location is the secreted. The catalysed reaction is an N-(acyl)-sphingosylphosphocholine = an N-(acyl)-sphingosyl-1,3-cyclic phosphate + choline. It catalyses the reaction an N-(acyl)-sphingosylphosphoethanolamine = an N-(acyl)-sphingosyl-1,3-cyclic phosphate + ethanolamine. It carries out the reaction a 1-acyl-sn-glycero-3-phosphocholine = a 1-acyl-sn-glycero-2,3-cyclic phosphate + choline. The enzyme catalyses a 1-acyl-sn-glycero-3-phosphoethanolamine = a 1-acyl-sn-glycero-2,3-cyclic phosphate + ethanolamine. Its function is as follows. Dermonecrotic toxins cleave the phosphodiester linkage between the phosphate and headgroup of certain phospholipids (sphingolipid and lysolipid substrates), forming an alcohol (often choline) and a cyclic phosphate. This toxin acts on sphingomyelin (SM). It may also act on ceramide phosphoethanolamine (CPE), lysophosphatidylcholine (LPC) and lysophosphatidylethanolamine (LPE), but not on lysophosphatidylserine (LPS), and lysophosphatidylglycerol (LPG). It acts by transphosphatidylation, releasing exclusively cyclic phosphate products as second products. It induces complement-dependent hemolysis, dermonecrosis, vascular permeability and platelet aggregation. The polypeptide is Dermonecrotic toxin LiSicTox-alphaIA2ai (Loxosceles intermedia (Brown spider)).